The chain runs to 335 residues: Glucose-dependent insulinotropic receptor (335 aa).

Topologically, residues 1–12 (MESSFSFGVILA) are extracellular. The chain crosses the membrane as a helical span at residues 13 to 33 (VLASLIIATNTLVAVAVLLLI). Over 34–37 (HKND) the chain is Cytoplasmic. Residues 38 to 58 (GVSLCFTLNLAVADTLIGVAI) form a helical membrane-spanning segment. Topologically, residues 59–81 (SGLLTDQLSSPSRPTQKTLCSLR) are extracellular. The chain crosses the membrane as a helical span at residues 82 to 102 (MAFVTSSAAASVLTVMLITFD). At 103-125 (RYLAIKQPFRYLKIMSGFVAGAC) the chain is on the cytoplasmic side. Residues 126 to 146 (IAGLWLVSYLIGFLPLGIPMF) traverse the membrane as a helical segment. Residues 147–164 (QQTAYKGQCSFFAVFHPH) lie on the Extracellular side of the membrane. The chain crosses the membrane as a helical span at residues 165–185 (FVLTLSCVGFFPAMLLFVFFY). Residues 186 to 226 (CDMLKIASMHSQQIRKMEHAGAMAGGYRSPRTPSDFKALRT) are Cytoplasmic-facing. Residues 227–247 (VSVLIGSFALSWTPFLITGIV) form a helical membrane-spanning segment. The Extracellular segment spans residues 248–262 (QVACQECHLYLVLER). A helical membrane pass occupies residues 263–283 (YLWLLGVGNSLLNPLIYAYWQ). Residues 284–335 (KEVRLQLYHMALGVKKVLTSFLLFLSARNCGPERPRESSCHIVTISSSEFDG) are Cytoplasmic-facing.

Belongs to the G-protein coupled receptor 1 family. Predominantly expressed in the pancreas, especially in the islets.

The protein localises to the cell membrane. Functionally, receptor for the endogenous fatty-acid ethanolamide oleoylethanolamide (OEA) and lysophosphatidylcholine (LPC). Functions as a glucose-dependent insulinotropic receptor. The activity of this receptor is mediated by G proteins which activate adenylate cyclase. Seems to act through a G(s) mediated pathway. The protein is Glucose-dependent insulinotropic receptor (GPR119) of Homo sapiens (Human).